Consider the following 491-residue polypeptide: MNLSSLRLESNPRWSYHAAHFPAHHGLNPSFRRNFVSCSSIKPSASSSLSVAESFTRDSASRIESLSQVSGVLGSQWGDEGKGKLVDILAEHFDIVARCQGGANAGHTIYNSEGKKFALHLVPSGILNEDTLCVIGNGVVVHLPGLFKEIDGLEANGVSCTGRILVSDRAHLLFDFHQEVDGLREAELAKSFIGTTRRGIGPCYSSKVIRNGIRVCDLRHMDTFPQKLDALLSDVASRFESFKYGPEMLKEEVERYKRFAERLEPFITDTVHFMNESIAKKKKILVEGGQATMLDIDFGTYPFVTSSSPSAGGICTGLGIAPRVVGDLIGVVKAYTSRVGSGPFPTEILGQGGDLLRFAGQEFGTTTGRPRRCGWLDVVALKYVCQINGFSSLNLTKLDVLSEFSEIQIGVSYKQIDGTPVESFPGDLCLLEQLKVDYEVLPGWKSDISSIRKYADLPKAAQQYVERIEELVGVPIHYIGIGPGRDALIYK.

Residues 78 to 84 (GDEGKGK) and 106 to 108 (GHT) contribute to the GTP site. Asp-79 functions as the Proton acceptor in the catalytic mechanism. 2 residues coordinate Mg(2+): Asp-79 and Gly-106. Residues 79–82 (DEGK), 104–107 (NAGH), Thr-196, Arg-210, Gln-290, Thr-305, and Arg-369 each bind IMP. The active-site Proton donor is the His-107. 365–371 (TTTGRPR) is a binding site for substrate. Residues Arg-371, 397-399 (KLD), and 480-482 (GIG) contribute to the GTP site.

It belongs to the adenylosuccinate synthetase family. In terms of assembly, homodimer. It depends on Mg(2+) as a cofactor.

It localises to the plastid. It is found in the chloroplast. It catalyses the reaction IMP + L-aspartate + GTP = N(6)-(1,2-dicarboxyethyl)-AMP + GDP + phosphate + 2 H(+). Its pathway is purine metabolism; AMP biosynthesis via de novo pathway; AMP from IMP: step 1/2. Functionally, plays an important role in the de novo pathway and in the salvage pathway of purine nucleotide biosynthesis. Catalyzes the first committed step in the biosynthesis of AMP from IMP. The chain is Adenylosuccinate synthetase, chloroplastic from Populus trichocarpa (Western balsam poplar).